Here is a 142-residue protein sequence, read N- to C-terminus: Large ribosomal subunit protein uL11 (142 aa).

It belongs to the universal ribosomal protein uL11 family. Part of the ribosomal stalk of the 50S ribosomal subunit. Interacts with L10 and the large rRNA to form the base of the stalk. L10 forms an elongated spine to which L12 dimers bind in a sequential fashion forming a multimeric L10(L12)X complex. One or more lysine residues are methylated.

Its function is as follows. Forms part of the ribosomal stalk which helps the ribosome interact with GTP-bound translation factors. This is Large ribosomal subunit protein uL11 from Pectobacterium carotovorum subsp. carotovorum (strain PC1).